A 613-amino-acid polypeptide reads, in one-letter code: ATP-dependent RNA helicase DeaD (613 aa).

Positions 5 to 33 match the Q motif motif; sequence ITFNDLGLPEFILKAVSDLGFETPSPIQQ. The Helicase ATP-binding domain maps to 36–207; the sequence is IPHLLNGNDV…KRFMNDPQEV (172 aa). Position 49 to 56 (49 to 56) interacts with ATP; that stretch reads AQTGSGKT. A DEAD box motif is present at residues 155-158; the sequence is DEAD. Residues 231 to 378 form the Helicase C-terminal domain; that stretch reads KNEALLRFLE…EVELPNHLVL (148 aa). Disordered stretches follow at residues 434–476 and 552–613; these read ILPP…PQPM and AVKS…RSSF. 2 stretches are compositionally biased toward basic and acidic residues: residues 440–469 and 556–613; these read PMEK…ERKG and DNSR…RSSF.

Belongs to the DEAD box helicase family. DeaD/CsdA subfamily.

The protein localises to the cytoplasm. It catalyses the reaction ATP + H2O = ADP + phosphate + H(+). DEAD-box RNA helicase involved in various cellular processes at low temperature, including ribosome biogenesis, mRNA degradation and translation initiation. In Haemophilus influenzae (strain ATCC 51907 / DSM 11121 / KW20 / Rd), this protein is ATP-dependent RNA helicase DeaD.